The sequence spans 206 residues: Ras-related protein ralB-A (206 aa).

Residue 21-28 (GSGGVGKS) participates in GTP binding. The short motif at 43–51 (YEPTKADSY) is the Effector region element. GTP is bound by residues 68 to 72 (DTAGQ) and 128 to 131 (NKSD). Residues 180-189 (KMSENKDKNG) are compositionally biased toward basic and acidic residues. The tract at residues 180 to 206 (KMSENKDKNGKKSGKSKKGFKQRCCLL) is disordered. The segment covering 190 to 200 (KKSGKSKKGFK) has biased composition (basic residues). C203 bears the Cysteine methyl ester mark. C203 carries the S-geranylgeranyl cysteine lipid modification. A propeptide spans 204–206 (CLL) (removed in mature form).

It belongs to the small GTPase superfamily. Ras family. As to quaternary structure, interacts with ralbp1 and rap1gds1. In terms of tissue distribution, weakly expressed in adult tissues and highest levels were found in heart, brain and testes.

Its subcellular location is the cell membrane. It localises to the midbody. It carries out the reaction GTP + H2O = GDP + phosphate + H(+). Multifunctional GTPase involved in a variety of cellular processes including gene expression, cell migration, cell proliferation, oncogenic transformation and membrane trafficking. Accomplishes its multiple functions by interacting with distinct downstream effectors. Acts as a GTP sensor for GTP-dependent exocytosis of dense core vesicles. Required both to stabilize the assembly of the exocyst complex and to localize functional exocyst complexes to the leading edge of migrating cells. Required for suppression of apoptosis. In late stages of cytokinesis, upon completion of the bridge formation between dividing cells, mediates exocyst recruitment to the midbody to drive abscission. Regulates the actin cytoskeleton to play a role in gastrulation or neurulation. During the cleavage stages, the GTP-bound form induces a cortical reaction that affects the localization of pigment granules. Activated by the FGF pathway via ras and ral-GDS, but independently of raf. Directs ralbp1 to the plasma membrane. Involved in ligand-dependent receptor mediated endocytosis of the EGF and insulin receptors. This is Ras-related protein ralB-A (ralb-a) from Xenopus laevis (African clawed frog).